We begin with the raw amino-acid sequence, 210 residues long: Chloramphenicol acetyltransferase (210 aa).

H79 is a catalytic residue.

The protein belongs to the transferase hexapeptide repeat family.

The enzyme catalyses chloramphenicol + acetyl-CoA = chloramphenicol 3-acetate + CoA. This enzyme is an effector of chloramphenicol resistance in bacteria. The polypeptide is Chloramphenicol acetyltransferase (catB2) (Escherichia coli).